Here is a 295-residue protein sequence, read N- to C-terminus: Trimeric intracellular cation channel type A (295 aa).

Residues 1 to 11 are Lumenal-facing; that stretch reads MELLSALSLDD. Residues 12 to 32 traverse the membrane as a helical segment; the sequence is LAVAFSKLPVFPLFDVAYYII. The Cytoplasmic segment spans residues 33–51; it reads SILYLKYEPGAVDLSKRSP. The helical transmembrane segment at 52–72 threads the bilayer; the sequence is VASWLCAMLYCFGSYILADVL. At 73 to 84 the chain is on the lumenal side; that stretch reads LGESPIHYFSNN. A Ca(2+)-binding site is contributed by glycine 74. The chain crosses the membrane as a helical span at residues 85 to 105; the sequence is ANILLASAVWYLTFFCPLNIF. Over 106–144 the chain is Cytoplasmic; sequence YKIVSFLPLKLVLVGMKEVVRVRKIAMGIHHAHHHYHHG. Lysine 122 and arginine 126 together coordinate a 1,2-diacyl-sn-glycero-3-phospho-(1D-myo-inositol-4,5-bisphosphate). The helical transmembrane segment at 145–165 threads the bilayer; it reads WVIMVLIGWVKGSGVALMSNL. At 166–178 the chain is on the lumenal side; sequence EQLLRGVWKPETN. The helical transmembrane segment at 179–199 threads the bilayer; the sequence is EILHMSFPTKASLYGAILFTL. Residues 200–201 are Cytoplasmic-facing; it reads QQ. The helical transmembrane segment at 202–222 threads the bilayer; it reads AHWLPISKAYLIFFFTLFMAI. Topologically, residues 223–233 are lumenal; the sequence is CKIYMTATHSH. A helical membrane pass occupies residues 234-254; the sequence is GSPFAIFESGICCVLFGAANG. The Cytoplasmic segment spans residues 255-295; that stretch reads DHDDHGDHHHHHDDHDVSHSTVKSKEELNEGTRKRKTKKAE. Basic and acidic residues predominate over residues 259–286; it reads HGDHHHHHDDHDVSHSTVKSKEELNEGT. Residues 259-295 are disordered; that stretch reads HGDHHHHHDDHDVSHSTVKSKEELNEGTRKRKTKKAE.

Belongs to the TMEM38 family. In terms of assembly, homotrimer; conformation seems to be controled by binding to diacylglycerol (DAG).

It is found in the sarcoplasmic reticulum membrane. The protein localises to the nucleus membrane. The enzyme catalyses K(+)(in) = K(+)(out). With respect to regulation, channel activity is activated by a change of voltage within the sarcoplasmic reticulum lumen and blocked by luminal high Ca(2+) levels. In terms of biological role, intracellular monovalent cation channel required for maintenance of rapid intracellular calcium release. Acts as a potassium counter-ion channel that functions in synchronization with calcium release from intracellular stores. Opened by a change of voltage within the sarcoplasmic reticulum lumen. In Xenopus tropicalis (Western clawed frog), this protein is Trimeric intracellular cation channel type A (tmem38a).